Consider the following 232-residue polypeptide: CMP-N,N'-diacetyllegionaminic acid synthase (232 aa).

It belongs to the CMP-NeuNAc synthase family.

The catalysed reaction is N,N-diacetyllegionaminate + CTP = CMP-N,N-diacetyllegionaminate + diphosphate. Its function is as follows. Involved in biosynthesis of legionaminic acid (5,7-diamino-3,5,7,9-tetradeoxy-D-glycero-D-galacto-non-2-ulosonic acid)(Leg), a sialic acid-like derivative that is incorporated into virulence-associated cell surface glycoconjugates such as lipopolysaccharide (LPS) which could be a key determinant in the ability of L.pneumophila to inhibit the fusion of phagosomes with lysosomes. LPS contains a majority alpha2,4-linked homomer of legionaminic acid. Catalyzes the conversion of N,N'-diacetyllegionaminic acid (Leg5Ac7Ac) and CTP into CMP-N,N'-diacetyllegionaminic acid (CMP-Leg5Ac7Ac). This Legionella pneumophila subsp. pneumophila (strain Philadelphia 1 / ATCC 33152 / DSM 7513) protein is CMP-N,N'-diacetyllegionaminic acid synthase (neuA).